A 90-amino-acid chain; its full sequence is Beta-microseminoprotein (90 aa).

5 disulfide bridges follow: cysteine 2–cysteine 16, cysteine 34–cysteine 70, cysteine 37–cysteine 46, cysteine 39–cysteine 47, and cysteine 61–cysteine 84. Valine amide is present on valine 90.

Belongs to the beta-microseminoprotein family.

Its subcellular location is the secreted. The polypeptide is Beta-microseminoprotein (MSMB) (Struthio camelus (Common ostrich)).